The chain runs to 702 residues: Arylphorin subunit alpha (702 aa).

Positions 1–16 (MKTVVILAGLVALALS) are cleaved as a signal peptide. N-linked (GlcNAc...) asparagine glycosylation is found at N75 and N214.

It belongs to the hemocyanin family. As to quaternary structure, arylphorin is a hexamer of subunits alpha and beta. Fat body.

It localises to the secreted. The protein localises to the extracellular space. Its function is as follows. Arylphorin is a larval storage protein (LSP) which may serve as a storage protein used primarily as a source of aromatic amino acids for protein synthesis during metamorphosis. It is a constituent of the sclerotizing system of the cuticle, and serves as a carrier for ecdysteroid hormone. In Manduca sexta (Tobacco hawkmoth), this protein is Arylphorin subunit alpha.